A 677-amino-acid polypeptide reads, in one-letter code: uncharacterized protein (677 aa).

3 consecutive transmembrane segments (helical) span residues 80-102, 338-360, and 367-386; these read ILSL…RASF, ALLS…LFGF, and LVAM…LLSL. A disordered region spans residues 523 to 556; sequence DEAASLPSDSSPEEDLDPLEEVESIEGTAEESTR. Residues 533–546 are compositionally biased toward acidic residues; it reads SPEEDLDPLEEVES.

Its subcellular location is the cell membrane. This is an uncharacterized protein from Treponema pallidum (strain Nichols).